Reading from the N-terminus, the 197-residue chain is Putative mediator of RNA polymerase II transcription subunit 21 (197 aa).

The segment at 29 to 110 (APPSFFNNPQ…QPQPTEEWDA (82 aa)) is disordered. Residues 37-68 (PQNQQQQQQQQQQQQQQQQQQQQQQNPQTQQQ) show a composition bias toward low complexity. Residues 38–101 (QNQQQQQQQQ…QQQQQQQQQQ (64 aa)) are a coiled coil. The span at 69 to 78 (LPPPPPPPPQ) shows a compositional bias: pro residues. Residues 79–104 (QQQQQQQQQQQQQQQQQQQQQQQPQP) are compositionally biased toward low complexity.

It belongs to the Mediator complex subunit 21 family. As to quaternary structure, component of the Mediator complex.

It is found in the nucleus. In terms of biological role, component of the Mediator complex, a coactivator involved in the regulated transcription of nearly all RNA polymerase II-dependent genes. Mediator functions as a bridge to convey information from gene-specific regulatory proteins to the basal RNA polymerase II transcription machinery. Mediator is recruited to promoters by direct interactions with regulatory proteins and serves as a scaffold for the assembly of a functional preinitiation complex with RNA polymerase II and the general transcription factors. This is Putative mediator of RNA polymerase II transcription subunit 21 (med21) from Dictyostelium discoideum (Social amoeba).